Consider the following 1737-residue polypeptide: MKLKYLSTILPAQDGEAKISNISCSPNGSRAAIACSDRSVALLDENGVQKDRFTCKPIDAKYGKKSFTVLCMTFSPDSSRIAIGQSDNVLFIYKVGTSWNEKKVIVNKFVQPSAVTCLSWPFDDKILVGQLDGKVRIGLIKTNKCSSLYKTDETVVSIQTHPKRTSFVSAHQDGSIILYNFSSRTQSKICTLQVPPYNLVFTNHGLVVATSDRRVLSYTENGVVQQQFDYNDQSEKEFSSISCDPTAQNVVVASYDRLRLFSWSARRGAWDEGAPLEIQNAYTIGALGWKMDGSTIYAGTVCGGVFSVDCCLRRGMLKSRFETTYVAPSHVILRDVTNDTRTNVISNKGLAIDELKIMGKDRYVIGYTSSSIIIADTESQRFSELEWQSGGHEKFYFDFNNCCLIINAGEVTVVEYGVDGSLGWVRTELTSPHLLSVQVSGPDVEEHKKVKKLAYLVDPTTISIINLINGQQESFINHTGAVDWIELNERASKLLYRDKRSKVTLVDISSDQRSVLLSFCTYVQWVPMSDVIVAQSGDNLSIWYNPDLPEQVTNMKIKGEVEAVLRDADRTEVIVQEPTAKVAYELDNTQIEFGAALEKRDFDRAVAFLESNTSGTDAYSMWIRVAEMALEHGNLFVAQRCYAAINDVAKVRKLHDILEIADEASISIGGDGTHFYKVRAMLAIMGRKFKEAERIFLEQNDTESAIGMYTSLHKWDEALELAKVLNYPEYEQLKTSYLRALSDTGQDSKAAELKVSDGDTLSAIQLYIKSNKPLSALSAANNDSVLSQDENILRQIADSLVKSQLYDKAGDVYEKLKDFDKAVEYFKKGDAYGKAIQLARFAFPEKVVTLEQEWGLHLEYIGQYDAAVNHFVEANDLKKAVEAAIRAKEWPKALSIVENIQDQKVRTGYYGEIADHYSNKGDFERAERLFVEAGLFNDAIMMYGKNNKWIDAFRLSEEFHGREATISSYLAKAEDLDEHGRFAEAEQLYITIGMPHKAIQMYDRVGRDDDVLRLVERYHGEHMHETRKRFATQYEERGDLKAAEEQFLKAGDFRSAVNMYKDSEMWSDAYRIAKTEGGENMEKQVLFMWAKSIGGDAAVKLLNKHGMLMEGIDFACETGAFDLAFDLARIGAKDRMGTVHVRLATQLEEEGRLEDASKHYVEGNKPELAVEMFIRDNDWADAERVAKDHCESLLPDVYTGQARRAIEEGDHLRAETFLLRANKPDIILRYFIENEMWPDALRIAQNYLPHQAALIQEEYEKSELRNGARGVDSFVAQAKEWEQQGDWRKAVSALLKINRDSTDNDALIKHSTEKAADLVMKFLMGDEEYIGAALGALDEANCNEKAAELLLLFGQSRQAINALCRAKQWAKAKQVAQEYLPEMVPEIEKIYKESLKSEGRLGELIDVDVITAIDMMIENDQWDKALDTAKSQNYRPLLDKYVAQYAAILVHRNDLSRVLAVLERYGASANPANFSIYKLLMEETLAKPRFDYTEIARVRNVHLDVYNALQKESSEHFEEFSRALWALHLIAMRTALEEIGDSVPEVQKLCLKQSLSLLRYTDILVADRIFYEAGAAAKDYGSEYESLGFLLLNHYLDLVDAIEEGNGELVDYSPFENSDIPTEVSLPTRQWLESAKHEEMKEWVLASSVDDAHAKELVYDKRGVFEASLKDKRGTAEPCLVTGYPVIESTVRIGSMVAEKDNLNKFLVVIKSNQTENLLNVQNFVAKWAGSPLAISL.

WD repeat units lie at residues 14 to 53, 63 to 103, 110 to 150, 151 to 189, 191 to 229, 233 to 273, and 511 to 553; these read DGEAKISNISCSPNGSRAAIACSDRSVALLDENGVQKDRF, GKKS…NEKK, VQPS…SLYK, TDETVVSIQTHPKRTSFVSAHQDGSIILYNFSSRTQSKI, TLQVPPYNLVFTNHGLVVATSDRRVLSYTENGVVQQQFD, QSEK…WDEG, and DQRS…EQVT. TPR repeat units lie at residues 700 to 737, 803 to 836, 848 to 881, 907 to 940, 979 to 1012, 1037 to 1070, and 1137 to 1170; these read NDTESAIGMYTSLHKWDEALELAKVLNYPEYEQLKTSY, SQLYDKAGDVYEKLKDFDKAVEYFKKGDAYGKAI, VTLEQEWGLHLEYIGQYDAAVNHFVEANDLKKAV, TGYYGEIADHYSNKGDFERAERLFVEAGLFNDAI, HGRFAEAEQLYITIGMPHKAIQMYDRVGRDDDVL, RGDLKAAEEQFLKAGDFRSAVNMYKDSEMWSDAY, and GTVHVRLATQLEEEGRLEDASKHYVEGNKPELAV.

Belongs to the IFT172 family. As to quaternary structure, component of the IFT complex B composed of at least che-2, che-13, dyf-1, dyf-3, dyf-6, dyf-11, dyf-13, ift-20, ift-74, ift-81, ifta-2, osm-1, osm-5 and osm-6. As to expression, expressed in amphid and phasmid chemosensory neurons, where it appears to concentrate at the base of the transition zones, which correspond to the basal bodies of motile and sensory cilia. Moves in the retrograde direction along cilia and dendrites, suggesting that it is retrieved from the distal endings of the cilia by a retrograde transport pathway that moves it along cilia and then dendrites, back to the neuronal cell body.

It is found in the cell projection. The protein resides in the cilium. In terms of biological role, component of the intraflagellar transport (IFT) complex B required for transport of proteins in the motile cilium. May be required for ciliary entrance and transport of specific ciliary cargo proteins such as che-3 which are related to motility. Required for the maintenance and formation of chemosensory cilia that detect chemosensory cues. This chain is Intraflagellar transport protein osm-1, found in Caenorhabditis elegans.